Consider the following 148-residue polypeptide: 3-hydroxyacyl-[acyl-carrier-protein] dehydratase FabZ (148 aa).

His47 is an active-site residue.

Belongs to the thioester dehydratase family. FabZ subfamily.

The protein localises to the cytoplasm. The enzyme catalyses a (3R)-hydroxyacyl-[ACP] = a (2E)-enoyl-[ACP] + H2O. Its function is as follows. Involved in unsaturated fatty acids biosynthesis. Catalyzes the dehydration of short chain beta-hydroxyacyl-ACPs and long chain saturated and unsaturated beta-hydroxyacyl-ACPs. This is 3-hydroxyacyl-[acyl-carrier-protein] dehydratase FabZ from Hydrogenobaculum sp. (strain Y04AAS1).